Consider the following 288-residue polypeptide: Cyclin-dependent kinase 2 homolog (288 aa).

A Protein kinase domain is found at 4–284 (YHGLEKIGEG…AKQAIEHPYF (281 aa)). ATP-binding positions include 10-18 (IGEGTYGVV) and Lys-32. Phosphothreonine is present on Thr-14. A Phosphotyrosine modification is found at Tyr-15. Asp-125 (proton acceptor) is an active-site residue. Thr-158 is subject to Phosphothreonine.

It belongs to the protein kinase superfamily. CMGC Ser/Thr protein kinase family. CDC2/CDKX subfamily. As to quaternary structure, may form a complex composed of at least the catalytic subunit CRK2 and a cyclin. The cofactor is Mg(2+).

It localises to the cytoplasm. It catalyses the reaction L-seryl-[protein] + ATP = O-phospho-L-seryl-[protein] + ADP + H(+). The catalysed reaction is L-threonyl-[protein] + ATP = O-phospho-L-threonyl-[protein] + ADP + H(+). It carries out the reaction [DNA-directed RNA polymerase] + ATP = phospho-[DNA-directed RNA polymerase] + ADP + H(+). With respect to regulation, phosphorylation at Thr-14 or Tyr-15 inactivates the enzyme, while phosphorylation at Thr-158 activates it. Its function is as follows. Serine/threonine-protein kinase. Involved in the control of the cell cycle. Required for entry into S-phase and mitosis. Probable component of the kinase complex that phosphorylates the repetitive C-terminus of RNA polymerase II. This Plasmodium berghei (strain Anka) protein is Cyclin-dependent kinase 2 homolog.